A 139-amino-acid chain; its full sequence is MRTLWILAVLQVGVEGHLLQFETMIIKMTKQTGLFSYSFYGCYCGWGGHGRPQDPTDRCCFVHDCCYGKVTNCDPKAAAYSYTIENGGIVCGGDDPCKKQICECDRAAAMCFRDNLDTYNYAKYWKFSAKDCQEESDPC.

An N-terminal signal peptide occupies residues 1–16; sequence MRTLWILAVLQVGVEG. 7 cysteine pairs are disulfide-bonded: Cys-42/Cys-132, Cys-44/Cys-60, Cys-59/Cys-111, Cys-65/Cys-139, Cys-66/Cys-104, Cys-73/Cys-97, and Cys-91/Cys-102. Positions 43, 45, and 47 each coordinate Ca(2+). Residue His-63 is part of the active site. Asp-64 contacts Ca(2+). The active site involves Asp-105.

Homodimer. It depends on Ca(2+) as a cofactor. Expressed by the venom gland.

Its subcellular location is the secreted. The catalysed reaction is a 1,2-diacyl-sn-glycero-3-phosphocholine + H2O = a 1-acyl-sn-glycero-3-phosphocholine + a fatty acid + H(+). Its function is as follows. Snake venom phospholipase A2 (PLA2) that inhibits ADP-induced platelet aggregation. PLA2 catalyzes the calcium-dependent hydrolysis of the 2-acyl groups in 3-sn-phosphoglycerides. The polypeptide is Acidic phospholipase A2 H1E6 (Calloselasma rhodostoma (Malayan pit viper)).